The primary structure comprises 508 residues: MTEPTQPQAAVAADENQIVAERRDKLRALRDQGIAYPNDFQPTHHAAGLQTEYADADKEALDAKALDVAVAGRMMLKRVMGKASFATVQDGSGQIQFFVTPADVGAETYDAFKKWDLGDIVAARGVLFRTNKGELSVKCTELRLLAKALRPLPDKFHGLADQETRYRQRYVDLIVTPETRATFRARTKAIASIRKFMSDADFMEVETPMLHPIPGGAAAKPFVTHHNALDMQMFLRIAPELYLKRLIVGGFERVFEINRNFRNEGVSPRHNPEFTMMEFYAAYTDYRWLMDFTERLIRQAAVDALGTATIRYQGRELDLAKPFRRLTITQAIQKYAPNYTDGQLSDDAFLRGELKRLGVDVTQPAFLNAGIGALQLALFEETAEAQLWEPTFIIDYPIEVSPLARESDTVAGITERFELFVTGREIANGFSELNDPEDQAARFRKQVEQKDAGDEEAMFFDADYIRALEYGMPPTGGCGIGIDRLVMLLTDSPTIRDVLLFPHLRRED.

Mg(2+) is bound by residues glutamate 418 and glutamate 425.

This sequence belongs to the class-II aminoacyl-tRNA synthetase family. Homodimer. The cofactor is Mg(2+).

Its subcellular location is the cytoplasm. The catalysed reaction is tRNA(Lys) + L-lysine + ATP = L-lysyl-tRNA(Lys) + AMP + diphosphate. The protein is Lysine--tRNA ligase of Burkholderia pseudomallei (strain 1710b).